Here is a 329-residue protein sequence, read N- to C-terminus: Flotillin-like protein FloA (329 aa).

2 helical membrane passes run 6–26 (FIVI…FVPI) and 27–47 (GLWI…LVGM).

Belongs to the flotillin-like FloA family. As to quaternary structure, homooligomerizes.

The protein resides in the cell membrane. The protein localises to the membrane raft. Found in functional membrane microdomains (FMM) that may be equivalent to eukaryotic membrane rafts. FMMs are highly dynamic and increase in number as cells age. Flotillins are thought to be important factors in membrane fluidity. This Staphylococcus aureus (strain JH1) protein is Flotillin-like protein FloA.